The chain runs to 305 residues: MAFAGKRLKGLIAATFTPMTSNSDINLAAIEQYVDYLVQKQHIRNIFVNGTTGEGMSLSVHERKSLAEEWVKQARGKMNDVIVHVGCLSLSDSKDLAAHAASCGADAISTVCPSFLKPSSLDALVLYLKEVASAAPNLPFYYYHIPRLTGITYQIYELLGKVKKNIPSFRGVKFSDVNLMDFSLCVSEYKEFDCLYGVDEQLLGALAFGAHGAVGSTYNYLGKKNGDMMAAFEEGNLQKARKIQCSLQEFLIFVFDMGWGLAEFKDIMSQVSGIPLGPSRLPLYSSMKFDHHDNIKTKMLKLDLI.

Aceneuramate-binding residues include threonine 51 and threonine 52. Tyrosine 143 (proton donor) is an active-site residue. The active-site Schiff-base intermediate with substrate is lysine 173. Aceneuramate is bound by residues serine 175, glycine 197, aspartate 199, glutamate 200, and serine 216.

This sequence belongs to the DapA family. NanA subfamily. Homotetramer.

The protein resides in the cytoplasm. It catalyses the reaction aceneuramate = aldehydo-N-acetyl-D-mannosamine + pyruvate. It participates in amino-sugar metabolism; N-acetylneuraminate degradation. Functionally, catalyzes the cleavage of N-acetylneuraminic acid (sialic acid) to form pyruvate and N-acetylmannosamine via a Schiff base intermediate. It prevents sialic acids from being recycled and returning to the cell surface. Involved in the N-glycolylneuraminic acid (Neu5Gc) degradation pathway. The polypeptide is N-acetylneuraminate lyase A (npl-a) (Xenopus laevis (African clawed frog)).